A 195-amino-acid polypeptide reads, in one-letter code: O-methyltransferase (195 aa).

It belongs to the methyltransferase superfamily.

It participates in secondary metabolite biosynthesis. In terms of biological role, O-methyltransferase; part of the gene cluster that mediates the biosynthesis of pyrophen and campyrone B, which represent a class of fungal amino acid-derived alpha-pyrone natural products. The first step of pyrophen biosynthesis is catalyzed by the PKS-NRPS hybrid synthetase ATPKS that uptakes and condensates L-phenylalanine and malonyl-CoA in order to produce desmethyldesacetylpyrophen. Although the A domain does not discriminate between 2 enantiomeric phenylalanines, the downstream KS domain must play a gate keeping role to stereoselectively accept the L-phenylalanyl-S-phosphopantetheine (Ppant)-T domain intermediate for chain elongation. The resulting amino acid derived diketide is off-loaded through lactonization to yield the alpha-pyrone intermediate desmethyldesacetylpyrophen. The cluster-specific O-methyltransferase (OMT) then methylates desmethyldesacetylpyrophen to desacetylpyrophen, which is further acetylated to pyrophen by an endogenous yet unidentified N-acetyltransferase. ATPKS has relaxed substrate specificity to activate and extend branched-chain amino acid L-leucine to produce small amounts of campyrone B. The protein is O-methyltransferase of Aspergillus niger (strain ATCC 1015 / CBS 113.46 / FGSC A1144 / LSHB Ac4 / NCTC 3858a / NRRL 328 / USDA 3528.7).